The primary structure comprises 321 residues: D-alanine--D-alanine ligase (321 aa).

One can recognise an ATP-grasp domain in the interval 121-315; sequence RIWFLTNNIN…FTNLIEEIIK (195 aa). 147–199 is a binding site for ATP; the sequence is PMKRPYVIKPLTQGSSIGVEVIFAEDDFNFADYDFPYGDQVIIEQYIKGRELQ. Mg(2+) is bound by residues glutamate 268, glutamate 282, and asparagine 284.

It belongs to the D-alanine--D-alanine ligase family. Requires Mg(2+) as cofactor. Mn(2+) serves as cofactor.

The protein localises to the cytoplasm. The enzyme catalyses 2 D-alanine + ATP = D-alanyl-D-alanine + ADP + phosphate + H(+). It functions in the pathway cell wall biogenesis; peptidoglycan biosynthesis. Cell wall formation. The chain is D-alanine--D-alanine ligase from Rickettsia africae (strain ESF-5).